Here is a 121-residue protein sequence, read N- to C-terminus: Putative iron-sulfur cluster insertion protein ErpA (121 aa).

The iron-sulfur cluster site is built by Cys-49, Cys-113, and Cys-115.

The protein belongs to the HesB/IscA family. In terms of assembly, homodimer. Requires iron-sulfur cluster as cofactor.

Required for insertion of 4Fe-4S clusters. The sequence is that of Putative iron-sulfur cluster insertion protein ErpA from Paraburkholderia phymatum (strain DSM 17167 / CIP 108236 / LMG 21445 / STM815) (Burkholderia phymatum).